Here is a 422-residue protein sequence, read N- to C-terminus: Putative acid phosphatase 5 (422 aa).

A signal peptide spans 1–13 (MLLLLVLLIGASG). The active-site Nucleophile is His-40. 3 N-linked (GlcNAc...) asparagine glycosylation sites follow: Asn-104, Asn-210, and Asn-218. 3 cysteine pairs are disulfide-bonded: Cys-152/Cys-363, Cys-205/Cys-302, and Cys-338/Cys-342. The Proton donor role is filled by Asp-279. N-linked (GlcNAc...) asparagine glycans are attached at residues Asn-312 and Asn-323.

It belongs to the histidine acid phosphatase family.

It carries out the reaction a phosphate monoester + H2O = an alcohol + phosphate. This Caenorhabditis elegans protein is Putative acid phosphatase 5 (pho-5).